Reading from the N-terminus, the 33-residue chain is GLMSVLKKAGKHVAKNVAASLMDSLKCKITGGC.

Cys-27 and Cys-33 are disulfide-bonded.

In terms of tissue distribution, expressed by the skin glands.

It is found in the secreted. Has antibacterial activity. The chain is Brevinin-2LT from Rana latastei (Italian agile frog).